The chain runs to 348 residues: Sex-lethal homolog (348 aa).

RRM domains are found at residues 110–188 (TNLI…YARP) and 196–276 (TNLY…LAEE). Residues 296–310 (GGGGGGGGGGGGGMG) are compositionally biased toward gly residues. The disordered stretch occupies residues 296–317 (GGGGGGGGGGGGGMGGPPPPPM).

The protein localises to the nucleus. Unknown; apparently not involved in somatic sex determination. The sequence is that of Sex-lethal homolog (SXL) from Ceratitis capitata (Mediterranean fruit fly).